A 315-amino-acid polypeptide reads, in one-letter code: Endolytic peptidoglycan transglycosylase RlpA (315 aa).

An N-terminal signal peptide occupies residues 1 to 19; sequence MGLALEKVCFLGVIFLISA. Cysteine 20 is lipidated: N-palmitoyl cysteine. Cysteine 20 carries S-diacylglycerol cysteine lipidation. A compositionally biased stretch (basic and acidic residues) spans 68–79; it reads SDSQDSNTKDQP. A disordered region spans residues 68–92; sequence SDSQDSNTKDQPLDNGMRDSSSIQR. An SPOR domain is found at 242-315; the sequence is SVSGGKFSLQ…YNQNAVLTRE (74 aa).

This sequence belongs to the RlpA family.

Its subcellular location is the cell membrane. Lytic transglycosylase with a strong preference for naked glycan strands that lack stem peptides. The chain is Endolytic peptidoglycan transglycosylase RlpA from Helicobacter pylori (strain ATCC 700392 / 26695) (Campylobacter pylori).